Reading from the N-terminus, the 316-residue chain is Diacylglycerol kinase (316 aa).

Positions 1-132 constitute a DAGKc domain; sequence MRKRARIIYN…VDIGKMNNRY (132 aa). Residues 10–14, Thr41, 67–73, and Thr94 contribute to the ATP site; these read NPTSG and GDGTLNE. The Mg(2+) site is built by Lys213, Asp216, and Tyr218. Glu273 (proton acceptor) is an active-site residue.

This sequence belongs to the diacylglycerol/lipid kinase family. In terms of assembly, homodimer. Mg(2+) serves as cofactor.

The enzyme catalyses a 1,2-diacyl-sn-glycerol + ATP = a 1,2-diacyl-sn-glycero-3-phosphate + ADP + H(+). Catalyzes the phosphorylation of diacylglycerol (DAG) into phosphatidic acid. Is a key enzyme involved in the production of lipoteichoic acid by reintroducing DAG formed from the breakdown of membrane phospholipids into the phosphatidylglycerol biosynthetic pathway. This chain is Diacylglycerol kinase (dagK), found in Staphylococcus epidermidis (strain ATCC 35984 / DSM 28319 / BCRC 17069 / CCUG 31568 / BM 3577 / RP62A).